Consider the following 365-residue polypeptide: Aspartate-semialdehyde dehydrogenase (365 aa).

T12, G13, S14, V15, S37, S40, L85, and D86 together coordinate NADP(+). C156 serves as the catalytic Acyl-thioester intermediate. G188 is an NADP(+) binding site. H256 functions as the Proton acceptor in the catalytic mechanism. N343 serves as a coordination point for NADP(+).

Belongs to the aspartate-semialdehyde dehydrogenase family. As to quaternary structure, homotetramer; dimer of dimers.

Its subcellular location is the cytoplasm. The protein resides in the cytosol. It localises to the nucleus. The catalysed reaction is L-aspartate 4-semialdehyde + phosphate + NADP(+) = 4-phospho-L-aspartate + NADPH + H(+). The protein operates within amino-acid biosynthesis; L-methionine biosynthesis via de novo pathway; L-homoserine from L-aspartate: step 2/3. Its pathway is amino-acid biosynthesis; L-threonine biosynthesis; L-threonine from L-aspartate: step 2/5. With respect to regulation, inhibited by the non-competitive inhibitors phthalaldehyde and naphthalene, the competitive inhibitor 1,4-benzoquinone and derivates such as 2-chloro-3-methoxy-1,4-naphthoquinone, 2,3-dichloro-1,4-naphthoquinone, 2-chloro-1,4-naphthoquinone, 2-bromo-1,4-naphthoquinone and 2,3-dichloro-5,8-dihydroxy-1,4-naphthoquinone, and 5-aminoisoquinoline. Inhibited by vinyl sulfones. Catalyzes the NADPH-dependent formation of L-aspartate 4-semialdehyde (L-ASA) by the reductive dephosphorylation of 4-phospho-L-aspartate. Mediates the second step in the biosynthesis of amino acids that derive from aspartate (the aspartate family of amino acids), including methioinine and threonine, the latter of which is a precursor to isoleucine. This is Aspartate-semialdehyde dehydrogenase from Candida albicans (strain SC5314 / ATCC MYA-2876) (Yeast).